The sequence spans 237 residues: Mannose-specific lectin alpha chain (237 aa).

Glu8 and Asp10 together coordinate Mn(2+). Ca(2+) contacts are provided by Asp10, Tyr12, Asn14, and Asp19. Tyr12 provides a ligand contact to a carbohydrate. Mn(2+) is bound by residues Asp19, His24, and Ser34. Residue 99–100 coordinates a carbohydrate; that stretch reads LY. Asp208 is a binding site for Ca(2+). Arg228 lines the a carbohydrate pocket.

Belongs to the leguminous lectin family. As to quaternary structure, homotetramer. The beta and gamma chains are produced by partial proteolytic processing of the lectin alpha chain by an asparaginyl endopeptidase.

Its function is as follows. D-mannose/D-glucose-binding lectin. Also binds derivatives of glucose and mannose such as more complex glycans. The chain is Mannose-specific lectin alpha chain from Cymbosema roseum (Dioclea purpurea).